Here is a 683-residue protein sequence, read N- to C-terminus: Dipeptidyl-peptidase 5 (683 aa).

The N-terminal stretch at 1-19 is a signal peptide; that stretch reads MHSLFKQLVFFLVMTLTAA. N-linked (GlcNAc...) asparagine glycosylation is found at asparagine 53, asparagine 69, asparagine 103, asparagine 116, asparagine 126, and asparagine 400. Catalysis depends on charge relay system residues serine 535, aspartate 617, and histidine 649.

This sequence belongs to the peptidase S9C family.

It is found in the secreted. The protein resides in the cytoplasm. Its subcellular location is the nucleus. The chain is Dipeptidyl-peptidase 5 from Schizosaccharomyces pombe (strain 972 / ATCC 24843) (Fission yeast).